A 337-amino-acid polypeptide reads, in one-letter code: Anthranilate phosphoribosyltransferase (337 aa).

Residues Gly-80, 83–84, Thr-88, 90–93, 108–116, and Ser-120 contribute to the 5-phospho-alpha-D-ribose 1-diphosphate site; these read GD, NIST, and KHGNRSVSS. Gly-80 provides a ligand contact to anthranilate. Ser-92 contributes to the Mg(2+) binding site. Asn-111 contacts anthranilate. Residue Arg-166 participates in anthranilate binding. Residues Asp-225 and Glu-226 each coordinate Mg(2+).

Belongs to the anthranilate phosphoribosyltransferase family. As to quaternary structure, homodimer. Mg(2+) serves as cofactor.

The enzyme catalyses N-(5-phospho-beta-D-ribosyl)anthranilate + diphosphate = 5-phospho-alpha-D-ribose 1-diphosphate + anthranilate. Its pathway is amino-acid biosynthesis; L-tryptophan biosynthesis; L-tryptophan from chorismate: step 2/5. Its function is as follows. Catalyzes the transfer of the phosphoribosyl group of 5-phosphorylribose-1-pyrophosphate (PRPP) to anthranilate to yield N-(5'-phosphoribosyl)-anthranilate (PRA). This is Anthranilate phosphoribosyltransferase from Syntrophobacter fumaroxidans (strain DSM 10017 / MPOB).